The following is a 267-amino-acid chain: NAD kinase 2 (267 aa).

Aspartate 52 functions as the Proton acceptor in the catalytic mechanism. NAD(+)-binding positions include 52–53 (DA), 124–125 (NE), arginine 151, aspartate 153, 164–169 (TAYNKS), and alanine 188.

It belongs to the NAD kinase family. Requires a divalent metal cation as cofactor.

It is found in the cytoplasm. It carries out the reaction NAD(+) + ATP = ADP + NADP(+) + H(+). Involved in the regulation of the intracellular balance of NAD and NADP, and is a key enzyme in the biosynthesis of NADP. Catalyzes specifically the phosphorylation on 2'-hydroxyl of the adenosine moiety of NAD to yield NADP. The polypeptide is NAD kinase 2 (Bacillus cereus (strain ATCC 14579 / DSM 31 / CCUG 7414 / JCM 2152 / NBRC 15305 / NCIMB 9373 / NCTC 2599 / NRRL B-3711)).